A 188-amino-acid polypeptide reads, in one-letter code: MTIKSDKWIKKMSQEHNMIEPFEAGQVKVINNQKIVSYGTSSYGYDVRCADEFKIFTNINSSIVDPKNFNDKNFVDFKGDVCIIPPNSFALARTVEKFKIPRDTLVVCLGKSTYARCGIIVNVTPLEPEWEGYVTLEFSNTTPLPAKIYANEGVAQMLFFQSDEECETSYADKGGKYQGQVGVTLPKC.

DCTP is bound by residues 111–116, 135–137, Q156, Y170, and Q180; these read KSTYAR and TLE. E137 (proton donor/acceptor) is an active-site residue.

The protein belongs to the dCTP deaminase family. Homotrimer.

It carries out the reaction dCTP + H2O + H(+) = dUTP + NH4(+). The protein operates within pyrimidine metabolism; dUMP biosynthesis; dUMP from dCTP (dUTP route): step 1/2. Catalyzes the deamination of dCTP to dUTP. The sequence is that of dCTP deaminase from Francisella tularensis subsp. tularensis (strain FSC 198).